Consider the following 104-residue polypeptide: Cysteine-rich and transmembrane domain-containing protein 1 (104 aa).

2 stretches are compositionally biased toward pro residues: residues 1 to 25 and 33 to 47; these read MNPE…PQQP and GAPP…PPQG. Positions 1–47 are disordered; it reads MNPENPPPYPGPGPTAPYPPYPQQPMGPMGPMGAPPPQGYPYPPPQG. The chain crosses the membrane as a helical span at residues 81–98; it reads LGPSTCLTACWTALCCCC.

This sequence belongs to the CYSTM1 family.

It localises to the membrane. In Mus musculus (Mouse), this protein is Cysteine-rich and transmembrane domain-containing protein 1 (Cystm1).